The following is a 202-amino-acid chain: Ras-related protein RABD2c (202 aa).

Residues 15–23 (GDSGVGKSC), 33–40 (YLDSYIST), 63–67 (DTAGQ), 121–124 (NKCD), and 151–153 (SAK) contribute to the GTP site. The Effector region signature appears at 37–45 (YISTIGVDF). The tract at residues 174–202 (ASQPAGGSKPPTVQIRGQPVNQQSGCCSS) is disordered. The segment covering 192-202 (PVNQQSGCCSS) has biased composition (polar residues). Residues cysteine 199 and cysteine 200 are each lipidated (S-geranylgeranyl cysteine).

Belongs to the small GTPase superfamily. Rab family.

It localises to the cell membrane. The protein localises to the golgi apparatus. Its subcellular location is the trans-Golgi network membrane. The protein resides in the golgi apparatus membrane. In terms of biological role, protein transport. Regulator of membrane traffic from the Golgi apparatus towards the endoplasmic reticulum (ER). This chain is Ras-related protein RABD2c (RABD2C), found in Arabidopsis thaliana (Mouse-ear cress).